The following is a 412-amino-acid chain: Phosphate-repressible acid phosphatase (412 aa).

Residues 1–19 (MLTKQTLLAFVGALALATG) form the signal peptide. N-linked (GlcNAc...) asparagine glycans are attached at residues Asn74, Asn121, Asn186, and Asn208. Residue Asp215 is the Proton donor of the active site. Residues Asn217, Asn332, and Asn343 are each glycosylated (N-linked (GlcNAc...) asparagine).

The N-terminus is blocked.

It is found in the secreted. The catalysed reaction is a phosphate monoester + H2O = an alcohol + phosphate. The polypeptide is Phosphate-repressible acid phosphatase (PHOA) (Penicillium chrysogenum (Penicillium notatum)).